A 294-amino-acid chain; its full sequence is N-acetylmuramic acid 6-phosphate etherase (294 aa).

The region spanning 54–217 (VIKSFEEEGR…STASMIGVGK (164 aa)) is the SIS domain. Glu82 acts as the Proton donor in catalysis. Glu113 is a catalytic residue.

Belongs to the GCKR-like family. MurNAc-6-P etherase subfamily. In terms of assembly, homodimer.

The enzyme catalyses N-acetyl-D-muramate 6-phosphate + H2O = N-acetyl-D-glucosamine 6-phosphate + (R)-lactate. It participates in amino-sugar metabolism; N-acetylmuramate degradation. Its function is as follows. Specifically catalyzes the cleavage of the D-lactyl ether substituent of MurNAc 6-phosphate, producing GlcNAc 6-phosphate and D-lactate. In Bacillus cereus (strain ATCC 10987 / NRS 248), this protein is N-acetylmuramic acid 6-phosphate etherase.